We begin with the raw amino-acid sequence, 305 residues long: Oxidoreductase swnR (305 aa).

It belongs to the NmrA-type oxidoreductase family. Isoflavone reductase subfamily.

The enzyme catalyses L-pipecolate + O2 = L-1-piperideine-6-carboxylate + H2O2 + H(+). Its pathway is mycotoxin biosynthesis. Its function is as follows. Oxidoreductase; part of the gene cluster that mediates the biosynthesis of swainsonine (SW), a cytotoxic fungal alkaloid and a potential cancer therapy drug. Swainsonine production occurs via a multibranched pathway and is dispensable for fungal colonization of plants and infection of insect hosts. The first step of swainsonine biosynthesis is the production of the precursor pipecolic acid (PA) via conversion of L-lysine (Lys) to 1-piperideine-6-carboxylate (P6C) by the aminotransferase swnA, the latter being further reduced to PA by the reductase swnR. The PKS-NRPS hybrid synthetase swnK uptakes and condensates PA and malonyl-CoA with and without skipping of the ketoreductase (KR) domain in order to produce 3 intermediates, 1-oxoindolizidine, (1S)-1-hydroxyindolizin, and (1R)-1-hydroxyindolizine; with the transisomer (1S)-1-hydroxyindolizin being predominant. The terminal thioester reductase (TE) domain of swnK is involved in reduction of the thioester bond to release the intermediate aldehydes. The oxidoreductase swnN could contribute to the reduction of 1-oxoindolizidine to (1S)-1-hydroxyindolizin and (1R)-1-hydroxyindolizine, contributing to the major route of SW production. The dioxygenase swnH2 would be responsible for the oxidization of (1R)-1-hydroxyindolizine into (1R,2S)-1,2-dihydroxyindolizine and of (1S)-1-hydroxyindolizin to yield both (1R,2S)-1,2-dihydroxyindolizine and (1S,2S)-1,2-dihydroxyindolizine. The dioxygenase swnH1 then performs the conversion of the 1,2-dihydroxyindolizine epimers to SW. The sequence is that of Oxidoreductase swnR from Arthroderma benhamiae (strain ATCC MYA-4681 / CBS 112371) (Trichophyton mentagrophytes).